Consider the following 49-residue polypeptide: Zinc-containing ferredoxin (49 aa).

Residues 1 to 36 (GIDPNYRTSRQVVGEHQGHKVYGPVDPPKVLGIHGT) are N-terminal extension. Residues H16 and H19 each contribute to the Zn(2+) site. An N6-methyllysine modification is found at K29. H34 lines the Zn(2+) pocket. Residues 37–49 (IVXVDFDLCIADG) are ferredoxin. C45 provides a ligand contact to [3Fe-4S] cluster.

[3Fe-4S] cluster is required as a cofactor. [4Fe-4S] cluster serves as cofactor. Requires Zn(2+) as cofactor.

Its function is as follows. Ferredoxins are iron-sulfur proteins that transfer electrons in a wide variety of metabolic reactions. The protein is Zinc-containing ferredoxin (zfx) of Acidianus infernus.